A 968-amino-acid polypeptide reads, in one-letter code: Chaperone protein ClpB3, chloroplastic (968 aa).

The N-terminal 67 residues, 1–67 (MATATTTATA…RLDHRPFVVR (67 aa)), are a transit peptide targeting the chloroplast. A Clp R domain is found at 78-222 (TQQEFTEMAW…KSAIESIRGK (145 aa)). Repeat regions lie at residues 82-147 (FTEM…IQRQ) and 159-222 (LGRD…IRGK). Residues 237–485 (LEKYGKDLTA…KLKMEITSKP (249 aa)) form an i region. Residue 282 to 289 (GEPGVGKT) coordinates ATP. The stretch at 488-606 (LDELDRSVIK…NEYLSSGKSM (119 aa)) forms a coiled coil. Residues 611–802 (VLGSDIAEIV…VIIMTSNVGS (192 aa)) form an II region. An ATP-binding site is contributed by 685 to 692 (GPTGVGKT).

Belongs to the ClpA/ClpB family.

The protein localises to the plastid. It is found in the chloroplast. Molecular chaperone essential for chloroplast development and seedling viability. Mediates internal thylakoid membrane formation and confers thermotolerance to chloroplasts during heat stress. In Arabidopsis thaliana (Mouse-ear cress), this protein is Chaperone protein ClpB3, chloroplastic (CLPB3).